The following is a 602-amino-acid chain: UvrABC system protein C (602 aa).

One can recognise a GIY-YIG domain in the interval 17-94; that stretch reads TTSGCYKMYS…IKEHKPDYNI (78 aa). The region spanning 199 to 234 is the UVR domain; that stretch reads SKLLDEIEIKMKEVIKREDFESAIKLKETKRSLIEI.

It belongs to the UvrC family. As to quaternary structure, interacts with UvrB in an incision complex.

The protein resides in the cytoplasm. The UvrABC repair system catalyzes the recognition and processing of DNA lesions. UvrC both incises the 5' and 3' sides of the lesion. The N-terminal half is responsible for the 3' incision and the C-terminal half is responsible for the 5' incision. This chain is UvrABC system protein C, found in Borrelia turicatae (strain 91E135).